We begin with the raw amino-acid sequence, 128 residues long: Ribonuclease pancreatic B (128 aa).

Positions 1 to 21 (AESSAMKFQRQHMDPEGSPSN) are disordered. Substrate contacts are provided by lysine 7 and arginine 10. Histidine 12 serves as the catalytic Proton acceptor. Residues asparagine 21 and asparagine 34 are each glycosylated (N-linked (GlcNAc...) asparagine). Cystine bridges form between cysteine 26/cysteine 84, cysteine 40/cysteine 95, cysteine 58/cysteine 110, and cysteine 65/cysteine 72. Residues 41 to 45 (KPVNT), lysine 66, and arginine 85 each bind substrate. Histidine 119 acts as the Proton donor in catalysis.

It belongs to the pancreatic ribonuclease family. In terms of tissue distribution, pancreas.

The protein resides in the secreted. The enzyme catalyses an [RNA] containing cytidine + H2O = an [RNA]-3'-cytidine-3'-phosphate + a 5'-hydroxy-ribonucleotide-3'-[RNA].. It catalyses the reaction an [RNA] containing uridine + H2O = an [RNA]-3'-uridine-3'-phosphate + a 5'-hydroxy-ribonucleotide-3'-[RNA].. The polypeptide is Ribonuclease pancreatic B (Cavia porcellus (Guinea pig)).